Here is a 435-residue protein sequence, read N- to C-terminus: Enolase (435 aa).

Substrate-binding residues include histidine 155 and glutamate 164. Catalysis depends on glutamate 205, which acts as the Proton donor. Aspartate 243, glutamate 292, and aspartate 319 together coordinate Mg(2+). Substrate is bound by residues glutamate 292, aspartate 319, lysine 344, 371 to 374 (SHRS), and lysine 395. Residue lysine 344 is the Proton acceptor of the active site.

The protein belongs to the enolase family. Homooctamer. Mg(2+) is required as a cofactor.

The protein resides in the cytoplasm. Its subcellular location is the secreted. It is found in the cell surface. It catalyses the reaction (2R)-2-phosphoglycerate = phosphoenolpyruvate + H2O. It participates in carbohydrate degradation; glycolysis; pyruvate from D-glyceraldehyde 3-phosphate: step 4/5. Functionally, catalyzes the reversible conversion of 2-phosphoglycerate (2-PG) into phosphoenolpyruvate (PEP). It is essential for the degradation of carbohydrates via glycolysis. 'Moonlights' as a plasminogen receptor and plasmin activator. Binds host (human) plasminogen in vitro; enhances the activity of host tissue-specific plasminogen activator (tPA). The protein is Enolase of Streptococcus pyogenes serotype M1.